A 597-amino-acid chain; its full sequence is Proline--tRNA ligase (597 aa).

The protein belongs to the class-II aminoacyl-tRNA synthetase family. ProS type 1 subfamily. Homodimer.

It localises to the cytoplasm. The catalysed reaction is tRNA(Pro) + L-proline + ATP = L-prolyl-tRNA(Pro) + AMP + diphosphate. Functionally, catalyzes the attachment of proline to tRNA(Pro) in a two-step reaction: proline is first activated by ATP to form Pro-AMP and then transferred to the acceptor end of tRNA(Pro). As ProRS can inadvertently accommodate and process non-cognate amino acids such as alanine and cysteine, to avoid such errors it has two additional distinct editing activities against alanine. One activity is designated as 'pretransfer' editing and involves the tRNA(Pro)-independent hydrolysis of activated Ala-AMP. The other activity is designated 'posttransfer' editing and involves deacylation of mischarged Ala-tRNA(Pro). The misacylated Cys-tRNA(Pro) is not edited by ProRS. The protein is Proline--tRNA ligase of Bifidobacterium longum (strain NCC 2705).